The chain runs to 348 residues: Chlorophyll(ide) b reductase NOL, chloroplastic (348 aa).

The N-terminal 61 residues, 1 to 61, are a transit peptide targeting the chloroplast; that stretch reads MATWSGFNVS…TRQNLTVTPS (61 aa). 84–108 contacts NAD(+); sequence ITGSTKGIGYALAREFLKAGDNVVI. Catalysis depends on tyrosine 233, which acts as the Proton acceptor.

It belongs to the short-chain dehydrogenases/reductases (SDR) family. In terms of assembly, interacts with NCY1 to form a complex that acts as a chlorophyll b reductase. Interacts with HCAR, RCCR and the LHCII complex. Part of a SGR1-CCE-LHCII complex, which acts in chlorophyll breakdown.

The protein resides in the plastid. It localises to the chloroplast thylakoid membrane. It carries out the reaction 7(1)-hydroxychlorophyllide a + NAD(+) = chlorophyllide b + NADH + H(+). The catalysed reaction is 7(1)-hydroxychlorophyllide a + NADP(+) = chlorophyllide b + NADPH + H(+). In terms of biological role, required for chlorophyll b degradation. Chlorophyll b, chlorophyllide b, pheophorbide b and pheophytin b can be used as substrates. Belongs to the chlorophyll catabolic enzymes (CCEs). In Arabidopsis thaliana (Mouse-ear cress), this protein is Chlorophyll(ide) b reductase NOL, chloroplastic (NOL).